The sequence spans 217 residues: ATP synthase F(0) complex subunit a (217 aa).

The next 6 helical transmembrane spans lie at 20-40 (MNWI…WILP), 70-90 (PAFL…FSLF), 100-120 (MVFS…LSTC), 126-146 (MIAH…MTII), 166-188 (LIAG…IIFI), and 193-215 (MIFE…SLYS).

It belongs to the ATPase A chain family. As to quaternary structure, component of the ATP synthase complex composed at least of ATP5F1A/subunit alpha, ATP5F1B/subunit beta, ATP5MC1/subunit c (homooctomer), MT-ATP6/subunit a, MT-ATP8/subunit 8, ATP5ME/subunit e, ATP5MF/subunit f, ATP5MG/subunit g, ATP5MK/subunit k, ATP5MJ/subunit j, ATP5F1C/subunit gamma, ATP5F1D/subunit delta, ATP5F1E/subunit epsilon, ATP5PF/subunit F6, ATP5PB/subunit b, ATP5PD/subunit d, ATP5PO/subunit OSCP. ATP synthase complex consists of a soluble F(1) head domain (subunits alpha(3) and beta(3)) - the catalytic core - and a membrane F(0) domain - the membrane proton channel (subunits c, a, 8, e, f, g, k and j). These two domains are linked by a central stalk (subunits gamma, delta, and epsilon) rotating inside the F1 region and a stationary peripheral stalk (subunits F6, b, d, and OSCP). Interacts with DNAJC30; interaction is direct.

Its subcellular location is the mitochondrion inner membrane. It catalyses the reaction H(+)(in) = H(+)(out). Its function is as follows. Subunit a, of the mitochondrial membrane ATP synthase complex (F(1)F(0) ATP synthase or Complex V) that produces ATP from ADP in the presence of a proton gradient across the membrane which is generated by electron transport complexes of the respiratory chain. ATP synthase complex consist of a soluble F(1) head domain - the catalytic core - and a membrane F(1) domain - the membrane proton channel. These two domains are linked by a central stalk rotating inside the F(1) region and a stationary peripheral stalk. During catalysis, ATP synthesis in the catalytic domain of F(1) is coupled via a rotary mechanism of the central stalk subunits to proton translocation. With the subunit c (ATP5MC1), forms the proton-conducting channel in the F(0) domain, that contains two crucial half-channels (inlet and outlet) that facilitate proton movement from the mitochondrial intermembrane space (IMS) into the matrix. Protons are taken up via the inlet half-channel and released through the outlet half-channel, following a Grotthuss mechanism. The protein is ATP synthase F(0) complex subunit a of Rhopalosiphum padi (Bird cherry-oat aphid).